A 395-amino-acid chain; its full sequence is Tyrosine--tRNA ligase (395 aa).

Residues 42-51 carry the 'HIGH' region motif; that stretch reads PTAPDIHLGH. The short motif at 226-230 is the 'KMSKS' region element; the sequence is KMSKS. Lysine 229 is a binding site for ATP. The region spanning 334–394 is the S4 RNA-binding domain; sequence IAISNLLKDA…GKRKFARITL (61 aa).

The protein belongs to the class-I aminoacyl-tRNA synthetase family. TyrS type 2 subfamily. Homodimer.

It localises to the cytoplasm. The enzyme catalyses tRNA(Tyr) + L-tyrosine + ATP = L-tyrosyl-tRNA(Tyr) + AMP + diphosphate + H(+). Its function is as follows. Catalyzes the attachment of tyrosine to tRNA(Tyr) in a two-step reaction: tyrosine is first activated by ATP to form Tyr-AMP and then transferred to the acceptor end of tRNA(Tyr). The protein is Tyrosine--tRNA ligase of Photobacterium profundum (strain SS9).